The chain runs to 724 residues: Catalase-peroxidase (724 aa).

Positions 98–226 (WHSAGSYRIA…LAAVMMGLIY (129 aa)) form a cross-link, tryptophyl-tyrosyl-methioninium (Trp-Tyr) (with M-252). Residue H99 is the Proton acceptor of the active site. Residues 226–252 (YVNPEGVDGHPDPQKTANDVRVTFARM) constitute a cross-link (tryptophyl-tyrosyl-methioninium (Tyr-Met) (with W-98)). Heme b is bound at residue H267.

It belongs to the peroxidase family. Peroxidase/catalase subfamily. As to quaternary structure, homodimer or homotetramer. Requires heme b as cofactor. In terms of processing, formation of the three residue Trp-Tyr-Met cross-link is important for the catalase, but not the peroxidase activity of the enzyme.

The catalysed reaction is H2O2 + AH2 = A + 2 H2O. It carries out the reaction 2 H2O2 = O2 + 2 H2O. Bifunctional enzyme with both catalase and broad-spectrum peroxidase activity. The protein is Catalase-peroxidase of Edwardsiella tarda.